Reading from the N-terminus, the 2371-residue chain is NBAS subunit of NRZ tethering complex (2371 aa).

Positions 1–1035 (MAAPESGPAL…KTEATTKLHD (1035 aa)) are interaction with USE1. 2 WD repeats span residues 130–169 (DPKP…LFVI) and 316–355 (QEQD…QQGE). 2 positions are modified to phosphoserine: Ser473 and Ser475. An interaction with ZW10 and RINT1 region spans residues 1036 to 2371 (MVDQLEQILS…TALRAAQHWV (1336 aa)). N6-acetyllysine is present on Lys1057.

Component of the NRZ complex composed of NBAS, ZW10 and RINT1/TIP20L; NRZ associates with SNAREs STX18, USE1, BNIP1/SEC20L and SEC22B (the assembly has been described as syntaxin 18 complex); links NRZ to SNARE USE1. Broadly expressed, with highest levels in heart and skeletal muscle, and lowest levels in liver, small intestine and thymus. Well expressed in retinal ganglion cells, epidermal skin cells, and leukocytes. Up-regulated together with N-myc in some neuroblastoma cell lines.

It localises to the cytoplasm. The protein resides in the endoplasmic reticulum. Its subcellular location is the endoplasmic reticulum membrane. Functionally, involved in Golgi-to-endoplasmic reticulum (ER) retrograde transport; the function is proposed to depend on its association in the NRZ complex which is believed to play a role in SNARE assembly at the ER. Required for normal embryonic development. May play a role in the nonsense-mediated decay pathway of mRNAs containing premature stop codons. This Homo sapiens (Human) protein is NBAS subunit of NRZ tethering complex.